The primary structure comprises 474 residues: MSKKLHIKTWGCQMNEYDSSKMADLLGEYQGYTLTEEASEADILLLNTCSIREKAQEKVFHQLGRWKTLKDKNPNLIIGVGGCVASQEGKAIKDRAQCVDIIFGPQTLHRLPEMIEQVRRGEKAVIDISFPEIEKFDRLPEPRAEGPTAFVSIMEGCSKYCSFCVVPYTRGEEVSRPSDDIILEIAQLAEQGVREVNLLGQNVNAYRGATHDGAICTFAELLRFVAAIDGIDRIRFTTSHPIEFTQDIIDVYEDTPELVSFLHLPVQSGSDRILTAMKRGHMAIEYKSIIRRLRKAREGIQISSDFIIGFPGETKEDFADTIKLIEDIGFDHSFSFIYSARPGTPAADLPDNVDMEEKKQRLAILQDRITQQAMRYSRHMMGTVQRILVEGPSVKNPMELRGRTENNRVVNFEGQPKHIGTFVDVEIVDVYTNSLRGVFIRGEDEMDLRRSLRPAEILAKRKQDDELGVTQFKP.

In terms of domain architecture, MTTase N-terminal spans 3–120 (KKLHIKTWGC…LPEMIEQVRR (118 aa)). [4Fe-4S] cluster-binding residues include cysteine 12, cysteine 49, cysteine 83, cysteine 157, cysteine 161, and cysteine 164. Positions 143–375 (RAEGPTAFVS…QDRITQQAMR (233 aa)) constitute a Radical SAM core domain. The TRAM domain occupies 378-441 (RHMMGTVQRI…TNSLRGVFIR (64 aa)).

It belongs to the methylthiotransferase family. MiaB subfamily. In terms of assembly, monomer. Requires [4Fe-4S] cluster as cofactor.

It is found in the cytoplasm. It carries out the reaction N(6)-dimethylallyladenosine(37) in tRNA + (sulfur carrier)-SH + AH2 + 2 S-adenosyl-L-methionine = 2-methylsulfanyl-N(6)-dimethylallyladenosine(37) in tRNA + (sulfur carrier)-H + 5'-deoxyadenosine + L-methionine + A + S-adenosyl-L-homocysteine + 2 H(+). In terms of biological role, catalyzes the methylthiolation of N6-(dimethylallyl)adenosine (i(6)A), leading to the formation of 2-methylthio-N6-(dimethylallyl)adenosine (ms(2)i(6)A) at position 37 in tRNAs that read codons beginning with uridine. The chain is tRNA-2-methylthio-N(6)-dimethylallyladenosine synthase from Shewanella baltica (strain OS155 / ATCC BAA-1091).